We begin with the raw amino-acid sequence, 418 residues long: 3-phosphoshikimate 1-carboxyvinyltransferase (418 aa).

3-phosphoshikimate contacts are provided by Lys-26, Ser-27, and Arg-31. Phosphoenolpyruvate is bound at residue Lys-26. The phosphoenolpyruvate site is built by Gly-97 and Arg-125. Residues Ser-170, Ser-171, Gln-172, Asp-297, Asn-320, and Lys-324 each contribute to the 3-phosphoshikimate site. Gln-172 is a binding site for phosphoenolpyruvate. The Proton acceptor role is filled by Asp-297. Positions 328, 375, and 400 each coordinate phosphoenolpyruvate.

The protein belongs to the EPSP synthase family. As to quaternary structure, monomer.

The protein resides in the cytoplasm. It carries out the reaction 3-phosphoshikimate + phosphoenolpyruvate = 5-O-(1-carboxyvinyl)-3-phosphoshikimate + phosphate. Its pathway is metabolic intermediate biosynthesis; chorismate biosynthesis; chorismate from D-erythrose 4-phosphate and phosphoenolpyruvate: step 6/7. In terms of biological role, catalyzes the transfer of the enolpyruvyl moiety of phosphoenolpyruvate (PEP) to the 5-hydroxyl of shikimate-3-phosphate (S3P) to produce enolpyruvyl shikimate-3-phosphate and inorganic phosphate. The protein is 3-phosphoshikimate 1-carboxyvinyltransferase of Pseudomonas syringae pv. syringae (strain B728a).